The chain runs to 116 residues: NADH-ubiquinone oxidoreductase chain 3 (116 aa).

3 helical membrane-spanning segments follow: residues 3–23, 56–76, and 87–107; these read LITTIITITITLSAVLATISF, FFLIAILFLLFDLEIALLLPL, and LTLIWSTAVLALLTLGLIYEW.

It belongs to the complex I subunit 3 family.

The protein resides in the mitochondrion membrane. It catalyses the reaction a ubiquinone + NADH + 5 H(+)(in) = a ubiquinol + NAD(+) + 4 H(+)(out). Its function is as follows. Core subunit of the mitochondrial membrane respiratory chain NADH dehydrogenase (Complex I) that is believed to belong to the minimal assembly required for catalysis. Complex I functions in the transfer of electrons from NADH to the respiratory chain. The immediate electron acceptor for the enzyme is believed to be ubiquinone. This is NADH-ubiquinone oxidoreductase chain 3 (MT-ND3) from Oncorhynchus gorbuscha (Pink salmon).